A 240-amino-acid polypeptide reads, in one-letter code: Ribonuclease PH (240 aa).

Phosphate is bound by residues R86 and 124 to 126 (GTR).

The protein belongs to the RNase PH family. In terms of assembly, homohexameric ring arranged as a trimer of dimers.

The enzyme catalyses tRNA(n+1) + phosphate = tRNA(n) + a ribonucleoside 5'-diphosphate. In terms of biological role, phosphorolytic 3'-5' exoribonuclease that plays an important role in tRNA 3'-end maturation. Removes nucleotide residues following the 3'-CCA terminus of tRNAs; can also add nucleotides to the ends of RNA molecules by using nucleoside diphosphates as substrates, but this may not be physiologically important. Probably plays a role in initiation of 16S rRNA degradation (leading to ribosome degradation) during starvation. The polypeptide is Ribonuclease PH (Rickettsia prowazekii (strain Madrid E)).